Reading from the N-terminus, the 364-residue chain is FNIP repeat-containing protein DDB_G0277323 (364 aa).

FNIP repeat units lie at residues 57–98 (MNIE…DLKY), 155–198 (YDCL…FGWT), 214–244 (LRVL…FGSS), 245–271 (FNQV…NQPI), and 295–340 (FNQP…FINN).

This is FNIP repeat-containing protein DDB_G0277323 from Dictyostelium discoideum (Social amoeba).